Consider the following 397-residue polypeptide: Elongation factor Tu (397 aa).

In terms of domain architecture, tr-type G spans 10-207 (KPHLNIGTIG…AVDAYIPEPE (198 aa)). A G1 region spans residues 19–26 (GHVDHGKT). Position 19 to 26 (19 to 26 (GHVDHGKT)) interacts with GTP. T26 contacts Mg(2+). Residues 60-64 (GVTIN) are G2. The tract at residues 81–84 (DCPG) is G3. GTP contacts are provided by residues 81 to 85 (DCPGH) and 136 to 139 (NKVD). Residues 136 to 139 (NKVD) form a G4 region. Residues 174–176 (SAL) are G5.

The protein belongs to the TRAFAC class translation factor GTPase superfamily. Classic translation factor GTPase family. EF-Tu/EF-1A subfamily. Monomer.

Its subcellular location is the cytoplasm. The catalysed reaction is GTP + H2O = GDP + phosphate + H(+). Functionally, GTP hydrolase that promotes the GTP-dependent binding of aminoacyl-tRNA to the A-site of ribosomes during protein biosynthesis. This Syntrophus aciditrophicus (strain SB) protein is Elongation factor Tu.